The sequence spans 281 residues: Nhr-229 coiled coil domain containing nccd-1 (281 aa).

The polypeptide is Nhr-229 coiled coil domain containing nccd-1 (Caenorhabditis elegans).